The sequence spans 627 residues: Endoglucanase 5 (627 aa).

The first 26 residues, 1–26 (MRKFGGSLFGVSLLLSVLLAAATAAA), serve as a signal peptide directing secretion. The active-site Nucleophile is Asp-83. The N-linked (GlcNAc...) asparagine glycan is linked to Asn-196. Residue His-416 is part of the active site. An N-linked (GlcNAc...) asparagine glycan is attached at Asn-465. Catalysis depends on residues Asp-468 and Glu-477. The N-linked (GlcNAc...) asparagine glycan is linked to Asn-561.

The protein belongs to the glycosyl hydrolase 9 (cellulase E) family.

It localises to the secreted. The catalysed reaction is Endohydrolysis of (1-&gt;4)-beta-D-glucosidic linkages in cellulose, lichenin and cereal beta-D-glucans.. This Arabidopsis thaliana (Mouse-ear cress) protein is Endoglucanase 5.